Consider the following 467-residue polypeptide: Receptor-like cytosolic serine/threonine-protein kinase RBK1 (467 aa).

Over residues 1 to 24 the composition is skewed to basic and acidic residues; sequence MAVEDNKNSESKNHQEVELHRNDL. Positions 1–73 are disordered; sequence MAVEDNKNSE…PFSNTTKTVS (73 aa). Residues 40-71 are compositionally biased toward low complexity; that stretch reads SDSDNSSSSCSSCSSDDKSSSTSSPFSNTTKT. A Phosphothreonine modification is found at Thr-142. The 278-residue stretch at 153–430 folds into the Protein kinase domain; that stretch reads FNPENMIGKG…LRGEDGPAEL (278 aa). ATP contacts are provided by residues 159 to 167 and Lys-181; that span reads IGKGGHAEV. Asp-278 acts as the Proton acceptor in catalysis. Ser-282 is modified (phosphoserine). Thr-318 is modified (phosphothreonine). Tyr-326 is subject to Phosphotyrosine.

Belongs to the protein kinase superfamily. Ser/Thr protein kinase family. In terms of assembly, interacts with ARAC5 and ARAC10. As to expression, mostly expressed in vasculature, hydathode endothem, leaf mesophyll cells and trichomes.

It localises to the cytoplasm. The protein localises to the endomembrane system. The protein resides in the nucleus. It catalyses the reaction L-seryl-[protein] + ATP = O-phospho-L-seryl-[protein] + ADP + H(+). It carries out the reaction L-threonyl-[protein] + ATP = O-phospho-L-threonyl-[protein] + ADP + H(+). The protein is Receptor-like cytosolic serine/threonine-protein kinase RBK1 (RBK1) of Arabidopsis thaliana (Mouse-ear cress).